We begin with the raw amino-acid sequence, 116 residues long: Beta-2-microglobulin (116 aa).

A signal peptide spans 1–19; the sequence is MRALITFALLCLLYITVQG. The Ig-like C1-type domain occupies 24-111; it reads PKVHVYSHFP…RHMKETKKFS (88 aa). A disulfide bond links Cys44 and Cys99.

Belongs to the beta-2-microglobulin family. As to quaternary structure, heterodimer of an alpha chain and a beta chain. Beta-2-microglobulin is the beta-chain of major histocompatibility complex class I molecules.

The protein localises to the secreted. Functionally, component of the class I major histocompatibility complex (MHC). Involved in the presentation of peptide antigens to the immune system. This Danio rerio (Zebrafish) protein is Beta-2-microglobulin (b2m).